The sequence spans 335 residues: G-protein coupled receptor 157 (335 aa).

Over 1–15 the chain is Extracellular; it reads MQPSPPPTELVPSER. Residues 16-36 form a helical membrane-spanning segment; that stretch reads AVVLLSCALSALGSGLLVATH. Over 37–48 the chain is Cytoplasmic; that stretch reads ALWPDLRSRARR. Residues 49–69 form a helical membrane-spanning segment; sequence LLLFLSLADLLSAASYFYGVL. Over 70–87 the chain is Extracellular; the sequence is QNFAGPSWDCVLQGALST. The helical transmembrane segment at 88–108 threads the bilayer; it reads FANTSSFFWTVAIALYLYLSI. Residues 109 to 119 lie on the Cytoplasmic side of the membrane; sequence VRAARGPRTDR. Residues 120–140 traverse the membrane as a helical segment; it reads LLWAFHVVSWGVPLVITVAAV. At 141–166 the chain is on the extracellular side; it reads ALKKIGYDASDVSVGWCWIDLEAKDH. A helical transmembrane segment spans residues 167-187; sequence VLWMLLTGKLWEMLAYVLLPL. Residues 188 to 226 are Cytoplasmic-facing; the sequence is LYLLVRKHINRAHTALSEYRPILSQEHRLLRHSSMADKK. Residues 227–247 form a helical membrane-spanning segment; sequence LVLIPLIFIGLRVWSTVRFVL. The Extracellular segment spans residues 248 to 258; the sequence is TLCGSPAVQTP. A helical membrane pass occupies residues 259-279; the sequence is VLVVLHGIGNTFQGGANCIMF. At 280-335 the chain is on the cytoplasmic side; the sequence is VLCTRAVRTRLFSLCCCCCSSQPPTKSPAGTPKAPAPSKPGESQESQGTPGELPST. The tract at residues 300–335 is disordered; that stretch reads SQPPTKSPAGTPKAPAPSKPGESQESQGTPGELPST. Polar residues predominate over residues 320-335; the sequence is GESQESQGTPGELPST.

Belongs to the G-protein coupled receptor 2 family.

Its subcellular location is the cell projection. It localises to the cilium membrane. Its function is as follows. Orphan receptor that promotes neuronal differentiation of radial glial progenitors (RGPs). The activity of this receptor is mediated by a G(q)-protein that activates a phosphatidylinositol-calcium second messenger. The chain is G-protein coupled receptor 157 (GPR157) from Homo sapiens (Human).